The sequence spans 394 residues: Putative F-box protein At5g66830 (394 aa).

Residues 17 to 63 (DWCWSKLPSDLMQFVFDRLGFADFQRAKSVCSSWLSVSRNSQPNNQI) enclose the F-box domain.

The protein is Putative F-box protein At5g66830 of Arabidopsis thaliana (Mouse-ear cress).